Here is a 149-residue protein sequence, read N- to C-terminus: Urease accessory protein UreE (149 aa).

This sequence belongs to the UreE family.

It localises to the cytoplasm. Functionally, involved in urease metallocenter assembly. Binds nickel. Probably functions as a nickel donor during metallocenter assembly. In Corynebacterium efficiens (strain DSM 44549 / YS-314 / AJ 12310 / JCM 11189 / NBRC 100395), this protein is Urease accessory protein UreE.